We begin with the raw amino-acid sequence, 459 residues long: Glycosyl hydrolase family 109 protein 1 (459 aa).

The tat-type signal signal peptide spans 1 to 31 (MHNIHRRHFLKAAGAVTAGLVTANIALNANA). Residues 64-65 (ER), Asp86, 135-138 (WEWH), 155-156 (EV), and Asn184 contribute to the NAD(+) site. Residues Tyr213, Arg232, 244–247 (YPTH), and Tyr326 contribute to the substrate site. Tyr244 contacts NAD(+).

It belongs to the Gfo/Idh/MocA family. Glycosyl hydrolase 109 subfamily. NAD(+) is required as a cofactor. Predicted to be exported by the Tat system. The position of the signal peptide cleavage has not been experimentally proven.

Glycosidase. This is Glycosyl hydrolase family 109 protein 1 from Shewanella sp. (strain ANA-3).